Here is a 426-residue protein sequence, read N- to C-terminus: MALRGSHRLDDFIRRCSALTLFHSQAPSRRVSHCGRDRRQQQDPPGQGRQEQQESGGGHWSRFGWRSLIRFFVPFSLGAVASSLVIKREELTPTITAKAMSGRRRDFNFIADVVAGCADSVVYIEIKDTRHFDYFSGQPITASNGSGFIIEQNGLILTNAHVVINKPHTMVQVRLSDGRTFPATIEDVDQTSDLATLRIQVSNLSVMRLGKSSTLRSGEWVVALGSPLALSNTVTAGVISSTQRASQELGLRNRDINYLQTDAAITFGNSGGPLVNLDGEAIGVNSMKVTAGISFAIPIDYVKVFLERAAERRKKGAAYKTGYPVKRYMGITMLTLTPDILFELKSRSQNMPSNLTHGVLVWKVIVGSPAHSGGLQPGDIVTHINKKEIKNSSDVYDALADNSKHLDIVILRGVKQMHVTITPEDP.

Residues Met1–Arg30 constitute a mitochondrion transit peptide. The tract at residues Arg30–His59 is disordered. Residues Val31–Gly78 constitute a propeptide that is removed on maturation. A compositionally biased stretch (low complexity) spans Gln42–Glu54. A helical transmembrane segment spans residues Leu68–Ile86. The IAP-binding motif lies at Ala79–Ser82. Residues Ser143 to Leu306 form a serine protease region. Active-site charge relay system residues include His161, Asp193, and Ser270. Residues Met329–Val414 form the PDZ domain.

It belongs to the peptidase S1C family. In terms of assembly, interacts with th/DIAP1 (via BIR 2 domain).

The protein resides in the mitochondrion intermembrane space. It localises to the mitochondrion membrane. The enzyme catalyses Cleavage of non-polar aliphatic amino-acids at the P1 position, with a preference for Val, Ile and Met. At the P2 and P3 positions, Arg is selected most strongly with a secondary preference for other hydrophilic residues.. Its function is as follows. Serine protease that shows proteolytic activity against a non-specific substrate beta-casein. Promotes or induces cell death either by direct binding to and inhibition of BIRC proteins (also called inhibitor of apoptosis proteins, IAPs), leading to an increase in caspase activity, or by a BIRC inhibition-independent, caspase-independent and serine protease activity-dependent mechanism. Can antagonize antiapoptotic activity of th/Diap1 by directly inducing the degradation of th/Diap1. This chain is Serine protease HTRA2, mitochondrial, found in Drosophila ananassae (Fruit fly).